A 343-amino-acid polypeptide reads, in one-letter code: L-threonine 3-dehydrogenase (343 aa).

C38 contacts Zn(2+). Active-site charge relay system residues include T40 and H43. Residues H63, E64, C93, C96, C99, and C107 each coordinate Zn(2+). NAD(+) is bound by residues I175, D195, R200, 262–264, and 286–287; these read LGI and IY.

This sequence belongs to the zinc-containing alcohol dehydrogenase family. As to quaternary structure, homotetramer. Requires Zn(2+) as cofactor.

The protein localises to the cytoplasm. The catalysed reaction is L-threonine + NAD(+) = (2S)-2-amino-3-oxobutanoate + NADH + H(+). Its pathway is amino-acid degradation; L-threonine degradation via oxydo-reductase pathway; glycine from L-threonine: step 1/2. In terms of biological role, catalyzes the NAD(+)-dependent oxidation of L-threonine to 2-amino-3-ketobutyrate. The protein is L-threonine 3-dehydrogenase of Paraburkholderia xenovorans (strain LB400).